The following is a 125-amino-acid chain: Natriuretic peptide GNP1 (125 aa).

The signal sequence occupies residues Met-1–Ala-25. Disordered regions lie at residues Gly-23–Lys-78 and Val-105–Lys-125. A propeptide spanning residues His-26–Glu-85 is cleaved from the precursor. Cysteines 94 and 110 form a disulfide.

This sequence belongs to the natriuretic peptide family. Expressed by the venom gland.

The protein resides in the secreted. Functionally, exhibits natriuretic and vasodepressor activity. Acts by stimulating cGMP. The chain is Natriuretic peptide GNP1 from Varanus varius (Lace monitor lizard).